The following is a 945-amino-acid chain: Translation initiation factor IF-2 (945 aa).

Disordered stretches follow at residues 52–80 (RSHG…DSSG) and 96–357 (MKRD…FQAP). A compositionally biased stretch (acidic residues) spans 153-175 (PEPEPIVEPEPEPEPEPEPEPQP). Composition is skewed to basic and acidic residues over residues 215-283 (DEER…KEAA) and 294-310 (AKTE…RTAR). Residues 445-614 (PRAPVVTVMG…LLQAEVLELT (170 aa)) form the tr-type G domain. Residues 454–461 (GHVDHGKT) form a G1 region. GTP is bound at residue 454–461 (GHVDHGKT). A G2 region spans residues 479-483 (GITQH). Positions 500–503 (DTPG) are G3. GTP-binding positions include 500-504 (DTPGH) and 554-557 (NKID). Positions 554–557 (NKID) are G4. The G5 stretch occupies residues 590 to 592 (SAK).

This sequence belongs to the TRAFAC class translation factor GTPase superfamily. Classic translation factor GTPase family. IF-2 subfamily.

It is found in the cytoplasm. One of the essential components for the initiation of protein synthesis. Protects formylmethionyl-tRNA from spontaneous hydrolysis and promotes its binding to the 30S ribosomal subunits. Also involved in the hydrolysis of GTP during the formation of the 70S ribosomal complex. The protein is Translation initiation factor IF-2 of Aromatoleum aromaticum (strain DSM 19018 / LMG 30748 / EbN1) (Azoarcus sp. (strain EbN1)).